The primary structure comprises 101 residues: NADH-quinone oxidoreductase subunit K (101 aa).

3 helical membrane passes run 4-24 (VYDY…GIML), 29-49 (IILL…NFIA), and 61-81 (VFVF…LAIV).

Belongs to the complex I subunit 4L family. In terms of assembly, NDH-1 is composed of 14 different subunits. Subunits NuoA, H, J, K, L, M, N constitute the membrane sector of the complex.

The protein localises to the cell inner membrane. It carries out the reaction a quinone + NADH + 5 H(+)(in) = a quinol + NAD(+) + 4 H(+)(out). In terms of biological role, NDH-1 shuttles electrons from NADH, via FMN and iron-sulfur (Fe-S) centers, to quinones in the respiratory chain. The immediate electron acceptor for the enzyme in this species is believed to be ubiquinone. Couples the redox reaction to proton translocation (for every two electrons transferred, four hydrogen ions are translocated across the cytoplasmic membrane), and thus conserves the redox energy in a proton gradient. This Legionella pneumophila (strain Paris) protein is NADH-quinone oxidoreductase subunit K.